A 144-amino-acid chain; its full sequence is 3-hydroxyacyl-[acyl-carrier-protein] dehydratase FabZ (144 aa).

His51 is a catalytic residue.

This sequence belongs to the thioester dehydratase family. FabZ subfamily.

Its subcellular location is the cytoplasm. The enzyme catalyses a (3R)-hydroxyacyl-[ACP] = a (2E)-enoyl-[ACP] + H2O. In terms of biological role, involved in unsaturated fatty acids biosynthesis. Catalyzes the dehydration of short chain beta-hydroxyacyl-ACPs and long chain saturated and unsaturated beta-hydroxyacyl-ACPs. This Clostridium botulinum (strain 657 / Type Ba4) protein is 3-hydroxyacyl-[acyl-carrier-protein] dehydratase FabZ.